The sequence spans 94 residues: Co-chaperonin GroES (94 aa).

It belongs to the GroES chaperonin family. Heptamer of 7 subunits arranged in a ring. Interacts with the chaperonin GroEL.

The protein resides in the cytoplasm. Together with the chaperonin GroEL, plays an essential role in assisting protein folding. The GroEL-GroES system forms a nano-cage that allows encapsulation of the non-native substrate proteins and provides a physical environment optimized to promote and accelerate protein folding. GroES binds to the apical surface of the GroEL ring, thereby capping the opening of the GroEL channel. In Brevibacillus choshinensis, this protein is Co-chaperonin GroES.